We begin with the raw amino-acid sequence, 63 residues long: Large ribosomal subunit protein bL28 (63 aa).

It belongs to the bacterial ribosomal protein bL28 family.

The sequence is that of Large ribosomal subunit protein bL28 from Coprothermobacter proteolyticus (strain ATCC 35245 / DSM 5265 / OCM 4 / BT).